The following is a 64-amino-acid chain: Large ribosomal subunit protein bL35 (64 aa).

Positions 1–14 are enriched in basic residues; the sequence is MKNKTHKGTAKRVK. Residues 1 to 30 form a disordered region; it reads MKNKTHKGTAKRVKVTGSGKLVREQANRRH. Positions 21-30 are enriched in basic and acidic residues; that stretch reads LVREQANRRH.

The protein belongs to the bacterial ribosomal protein bL35 family.

The protein is Large ribosomal subunit protein bL35 of Corynebacterium efficiens (strain DSM 44549 / YS-314 / AJ 12310 / JCM 11189 / NBRC 100395).